The chain runs to 1303 residues: Zinc finger CCCH domain-containing protein 4 (1303 aa).

Pro residues predominate over residues 1 to 33; that stretch reads MEAAPGTPPPPPSESPPPPSPPPPSTPSPPPCS. Positions 1–388 are disordered; sequence MEAAPGTPPP…RDHDKPHQQS (388 aa). The segment covering 53–73 has biased composition (acidic residues); sequence DREDGELEEGELEDDGAEETQ. 2 positions are modified to phosphothreonine: Thr-72 and Thr-75. Phosphoserine occurs at positions 76, 92, and 94. Residues 80–99 show a composition bias toward basic and acidic residues; it reads ERSRKEKGEKHHSDSDEEKS. The stretch at 95–128 forms a coiled coil; sequence DEEKSHRRLKRKRKKEREKEKRRSKKRRKSKHKR. The segment covering 100–130 has biased composition (basic residues); it reads HRRLKRKRKKEREKEKRRSKKRRKSKHKRHA. The segment covering 135–144 has biased composition (acidic residues); sequence DFSDFSDDSD. Tyr-155 bears the Phosphotyrosine mark. Residues 194–218 are compositionally biased toward acidic residues; sequence EDYENEQYGEYEGDEEEDMGKEDYD. The span at 219 to 235 shows a compositional bias: basic and acidic residues; that stretch reads DFTKELNQYRRAKEGSS. Positions 238–251 are enriched in basic residues; sequence RGSRGRGRGYRGRG. Residues 252 to 274 show a composition bias toward gly residues; sequence SRGGSRGRGMGRGSRGRGRGSMG. Over residues 278 to 304 the composition is skewed to acidic residues; the sequence is PEDEEDFYEEEMDYGESEEPMGDDDYD. Residues 305 to 321 show a composition bias toward basic and acidic residues; the sequence is EYSKELNQYRRSKDSRG. The segment covering 323–346 has biased composition (basic residues); the sequence is GLSRGRGRGSRGRGKGMGRGRGRG. Acidic residues predominate over residues 358 to 369; the sequence is NDDEDFYDEDMG. The segment covering 377–388 has biased composition (basic and acidic residues); the sequence is RSRDHDKPHQQS. 3 consecutive C3H1-type zinc fingers follow at residues 390–417, 419–446, and 447–470; these read KKGKVICKYFVEGRCTWGDHCNFSHDIE, PKKRELCKFYITGFCARAENCPYMHGDF, and PCKLYHTTGNCINGDDCMFSHDPL. Residues 486–496 are compositionally biased toward acidic residues; sequence AEAGAEDEKEV. The disordered stretch occupies residues 486–571; it reads AEAGAEDEKE…HEPLSPQQLQ (86 aa). Pro residues-rich tracts occupy residues 507-529 and 539-558; these read LPKPPPGVGLLPTPPRPPGPQAP and GGPPPPPPPPPPPPGPPQMP. The residue at position 601 (Arg-601) is an Asymmetric dimethylarginine. The segment covering 605 to 624 has biased composition (pro residues); that stretch reads PGGPPGPMGPGPNMGPPGPM. Disordered regions lie at residues 605 to 685, 710 to 955, and 996 to 1288; these read PGGP…SGMM, GLLG…PRSQ, and PPVP…ASLK. Positions 630–650 are enriched in basic and acidic residues; it reads PDMHPDMHPDMHPDMHADMHA. A compositionally biased stretch (pro residues) spans 659 to 673; it reads NPGPPMGPGGPPMMP. Basic and acidic residues-rich tracts occupy residues 717–739 and 782–795; these read DYGHYEELPGEPGEHLFPEHPLE and ERARRLAESSKQDR. Positions 767 to 800 form a coiled coil; the sequence is RALYLRIQQKQQEEEERARRLAESSKQDRENEEG. Ser-807 and Ser-808 each carry phosphoserine. Over residues 815 to 843 the composition is skewed to polar residues; sequence SSVTSILKTLRQQTSSRPPASVGELSSSG. A compositionally biased stretch (basic and acidic residues) spans 860–875; sequence ADPRLSRDPRLTRHVE. Phosphoserine occurs at positions 904, 907, and 908. Low complexity predominate over residues 904–918; sequence SLHSSPVGPSSSKGS. Polar residues-rich tracts occupy residues 1028–1038 and 1053–1062; these read GASTDSSTQGA and VNATGSSAAP. A compositionally biased stretch (basic and acidic residues) spans 1067–1084; the sequence is KPSDPRVRKAPTDPRLQK. The span at 1097-1110 shows a compositional bias: low complexity; the sequence is PGPAEAPSPTASPS. Ser-1104 is modified (phosphoserine). Thr-1106 is subject to Phosphothreonine. A phosphoserine mark is found at Ser-1108, Ser-1110, and Ser-1114. Phosphothreonine is present on Thr-1118. Positions 1129–1139 are enriched in gly residues; it reads GGLGQGGGGGQ. Over residues 1224–1234 the composition is skewed to low complexity; it reads KAAAAPAATTA. Pro residues predominate over residues 1235–1245; sequence TPPPEGAPPQP. Over residues 1259 to 1268 the composition is skewed to polar residues; that stretch reads VKQTPKTGSG. Residues Ser-1269 and Ser-1275 each carry the phosphoserine modification.

This sequence belongs to the suppressor of sable family. As to quaternary structure, interacts with WDR82.

The protein resides in the chromosome. RNA-binding protein that suppresses transcription of long non-coding RNAs (lncRNAs). LncRNAs are defined as transcripts more than 200 nucleotides that are not translated into protein. Together with WDR82, part of a transcription termination checkpoint that promotes transcription termination of lncRNAs and their subsequent degradation by the exosome. The transcription termination checkpoint is activated by the inefficiently spliced first exon of lncRNAs. This chain is Zinc finger CCCH domain-containing protein 4, found in Homo sapiens (Human).